We begin with the raw amino-acid sequence, 213 residues long: ATP phosphoribosyltransferase (213 aa).

Belongs to the ATP phosphoribosyltransferase family. Short subfamily. Heteromultimer composed of HisG and HisZ subunits.

The protein localises to the cytoplasm. The enzyme catalyses 1-(5-phospho-beta-D-ribosyl)-ATP + diphosphate = 5-phospho-alpha-D-ribose 1-diphosphate + ATP. It participates in amino-acid biosynthesis; L-histidine biosynthesis; L-histidine from 5-phospho-alpha-D-ribose 1-diphosphate: step 1/9. Its function is as follows. Catalyzes the condensation of ATP and 5-phosphoribose 1-diphosphate to form N'-(5'-phosphoribosyl)-ATP (PR-ATP). Has a crucial role in the pathway because the rate of histidine biosynthesis seems to be controlled primarily by regulation of HisG enzymatic activity. In Bacillus licheniformis (strain ATCC 14580 / DSM 13 / JCM 2505 / CCUG 7422 / NBRC 12200 / NCIMB 9375 / NCTC 10341 / NRRL NRS-1264 / Gibson 46), this protein is ATP phosphoribosyltransferase.